Reading from the N-terminus, the 55-residue chain is Potassium channel toxin alpha-KTx 17.1 (55 aa).

The signal sequence occupies residues methionine 1–alanine 23. A Pyrrolidone carboxylic acid modification is found at glutamine 24. 3 disulfide bridges follow: cysteine 27/cysteine 43, cysteine 33/cysteine 48, and cysteine 37/cysteine 50. At threonine 53 the chain carries Threonine amide.

It belongs to the short scorpion toxin superfamily. Potassium channel inhibitor family. Alpha-KTx 17 subfamily. As to expression, expressed by the venom gland.

It localises to the secreted. Blocker of potassium channels, which inhibits both the delayed rectifier and fast transient potassium current. The inhibition is reversible and voltage-independent. It causes a depolarizing shift of the steady-state activation curve of the currents, without changing their steady-state inactivation behavior. The polypeptide is Potassium channel toxin alpha-KTx 17.1 (Olivierus martensii (Manchurian scorpion)).